The following is a 201-amino-acid chain: Adenylyl-sulfate kinase (201 aa).

35-42 (GLSGSGKS) is an ATP binding site. Ser109 serves as the catalytic Phosphoserine intermediate.

This sequence belongs to the APS kinase family.

It catalyses the reaction adenosine 5'-phosphosulfate + ATP = 3'-phosphoadenylyl sulfate + ADP + H(+). The protein operates within sulfur metabolism; hydrogen sulfide biosynthesis; sulfite from sulfate: step 2/3. Catalyzes the synthesis of activated sulfate. This chain is Adenylyl-sulfate kinase, found in Shigella boydii serotype 18 (strain CDC 3083-94 / BS512).